Consider the following 493-residue polypeptide: WAS/WASL-interacting protein family member 1 (493 aa).

The segment covering 1–14 (MPVPPPPAPPPPPT) has biased composition (pro residues). Residues 1–493 (MPVPPPPAPP…GAPPLPPIPR (493 aa)) form a disordered region. Positions 21 to 31 (EKPTLNKTEQA) are enriched in polar residues. A WH2 domain is found at 32 to 49 (GRNALLSDISKGKKLKKT). Arg33 carries the asymmetric dimethylarginine modification. Residues 45 to 48 (KLKK) form a binds actin region. Over residues 67-105 (ASAGGYGGGGGGGGGGGGGGGGSGGNFGGGGPPGLGGLF) the composition is skewed to gly residues. Arg126 and Arg135 each carry omega-N-methylarginine. 3 stretches are compositionally biased toward pro residues: residues 142–155 (FSPP…PAPS), 162–175 (PPEP…PPRP), and 183–195 (SLPP…PRPV). A Phosphoserine modification is found at Ser143. Ser227 carries the post-translational modification Phosphoserine. Composition is skewed to pro residues over residues 239-248 (FPRPPLPPTP), 274-290 (VPPP…PSTP), and 298-315 (APPP…PLPP). Phosphoserine occurs at positions 330 and 340. The segment covering 336-361 (PPLPSPGRSGPLPPPPSERPPPPVRD) has biased composition (pro residues). 3 XRSGPXPPXP motif repeats span residues 342–351 (GRSGPLPPPP), 364–373 (GRSGPLPPPP), and 400–409 (PRSGPRPPLP). Positions 403–424 (GPRPPLPPDRPGAGAPPPPPPS) are enriched in pro residues. Residues 425–434 (TSVRNGFQDS) are compositionally biased toward polar residues. Residues 470–484 (ARNESRSGSNRRERG) show a composition bias toward basic and acidic residues.

Belongs to the verprolin family. In terms of assembly, binds to WAS within the N-terminal region, at a site distinct from the CDC42-binding site. Binds profilin and actin. Binds to WASL. Interacts with DBNL. Interacts with DBNL. Interacts with FNBP1L (via the SH3 domain).

It localises to the cytoplasmic vesicle. The protein resides in the cytoplasm. The protein localises to the cytoskeleton. It is found in the cell projection. Its subcellular location is the ruffle. In terms of biological role, plays a role in the reorganization of the actin cytoskeleton. Contributes with NCK1 and GRB2 in the recruitment and activation of WASL. May participate in regulating the subcellular localization of WASL, resulting in the disassembly of stress fibers in favor of filopodia formation. Plays a role in the formation of cell ruffles. In Mus musculus (Mouse), this protein is WAS/WASL-interacting protein family member 1 (Wipf1).